Here is a 254-residue protein sequence, read N- to C-terminus: Mitochondrial cardiolipin hydrolase (254 aa).

At Met1 to Ala9 the chain is on the mitochondrial intermembrane side. The tract at residues Met1–Arg43 is required for mitochondrial localization. A helical transmembrane segment spans residues Ala10–Ala32. Residues Gly33 to Val254 are Cytoplasmic-facing. A C3H1-type; atypical zinc finger spans residues Pro49–Ser82. Residues Asp155 to Ala182 form the PLD phosphodiesterase domain. Active-site residues include His160, Lys162, and Asp167.

This sequence belongs to the phospholipase D family. MitoPLD/Zucchini subfamily. As to quaternary structure, homodimer. Interacts with MOV10L1. Interacts with MIGA1 and MIGA2; possibly facilitating homodimer formation. Interacts with GK2.

The protein localises to the mitochondrion outer membrane. It localises to the nucleus membrane. It is found in the cell membrane. The protein resides in the golgi apparatus. The catalysed reaction is a cardiolipin + H2O = a 1,2-diacyl-sn-glycero-3-phospho-(1'-sn-glycerol) + a 1,2-diacyl-sn-glycero-3-phosphate + H(+). With respect to regulation, single stranded DNA (ssDNA) hydrolase activity does not depend upon, but is stimulated by the presence of Ca(2+) and Mn(2+). MIGA1 and MIGA2 increase PLD6 self-association affinity and affects the homodimer conformation facilitating its phospholipase activity over the nuclease activity. MYC induces its expression and stimulates its phospholipase activity. Its function is as follows. Presents phospholipase and nuclease activities, depending on the different physiological conditions. Interaction with Mitoguardin (MIGA1 or MIGA2) affects the dimer conformation, facilitating the lipase activity over the nuclease activity. Plays a key role in mitochondrial fusion and fission via its phospholipase activity. In its phospholipase role, it uses the mitochondrial lipid cardiolipin as substrate to generate phosphatidate (PA or 1,2-diacyl-sn-glycero-3-phosphate), a second messenger signaling lipid. Production of PA facilitates Mitofusin-mediated fusion, whereas the cleavage of PA by the Lipin family of phosphatases produces diacylgycerol (DAG) which promotes mitochondrial fission. Both Lipin and DAG regulate mitochondrial dynamics and membrane fusion/fission, important processes for adapting mitochondrial metabolism to changes in cell physiology. Mitochondrial fusion enables cells to cope with the increased nucleotide demand during DNA synthesis. Mitochondrial function and dynamics are closely associated with biological processes such as cell growth, proliferation, and differentiation. Mediator of MYC activity, promotes mitochondrial fusion and activates AMPK which in turn inhibits YAP/TAZ, thereby inducing cell growth and proliferation. The endonuclease activity plays a critical role in PIWI-interacting RNA (piRNA) biogenesis during spermatogenesis. Implicated in spermatogenesis and sperm fertility in testicular germ cells, its single strand-specific nuclease activity is critical for the biogenesis/maturation of PIWI-interacting RNA (piRNA). MOV10L1 selectively binds to piRNA precursors and funnels them to the endonuclease that catalyzes the first cleavage step of piRNA processing to generate piRNA intermediate fragments that are subsequently loaded to Piwi proteins. Cleaves either DNA or RNA substrates with similar affinity, producing a 5' phosphate end, in this way it participates in the processing of primary piRNA transcripts. piRNAs provide essential protection against the activity of mobile genetic elements. piRNA-mediated transposon silencing is thus critical for maintaining genome stability, in particular in germline cells when transposons are mobilized as a consequence of wide-spread genomic demethylation. PA may act as signaling molecule in the recognition/transport of the precursor RNAs of primary piRNAs. Interacts with tesmin in testes, suggesting a role in spermatogenesis via association with its interacting partner. This is Mitochondrial cardiolipin hydrolase (PLD6) from Canis lupus familiaris (Dog).